Reading from the N-terminus, the 182-residue chain is Large ribosomal subunit protein bL25 (182 aa).

The protein belongs to the bacterial ribosomal protein bL25 family. CTC subfamily. Part of the 50S ribosomal subunit; part of the 5S rRNA/L5/L18/L25 subcomplex. Contacts the 5S rRNA. Binds to the 5S rRNA independently of L5 and L18.

This is one of the proteins that binds to the 5S RNA in the ribosome where it forms part of the central protuberance. The protein is Large ribosomal subunit protein bL25 of Borrelia turicatae (strain 91E135).